Consider the following 522-residue polypeptide: O-fucosyltransferase 38 (522 aa).

The chain crosses the membrane as a helical; Signal-anchor for type II membrane protein span at residues 26–46 (AISLYLIFVFAFTIWVLVFSS). The segment covering 54–67 (DHTKHQQQHHRDLI) has biased composition (basic and acidic residues). The tract at residues 54–73 (DHTKHQQQHHRDLIDSESFP) is disordered. The N-linked (GlcNAc...) asparagine glycan is linked to asparagine 147. 284–286 (HLR) is a binding site for substrate. N-linked (GlcNAc...) asparagine glycosylation is present at asparagine 325. The interval 475–496 (HKDRQGAPRRRKGPTQGIKGRA) is disordered.

The protein belongs to the glycosyltransferase GT106 family.

The protein resides in the membrane. It functions in the pathway glycan metabolism. This Arabidopsis thaliana (Mouse-ear cress) protein is O-fucosyltransferase 38.